Here is a 157-residue protein sequence, read N- to C-terminus: Probable succinate transporter subunit YjjB (157 aa).

The next 4 membrane-spanning stretches (helical) occupy residues 6–26 (IILT…GFAM), 51–71 (VLMI…ILVG), 87–107 (VFTV…VAMI), and 129–149 (FLKA…PGLW).

The protein belongs to the ThrE exporter (TC 2.A.79) family. The transporter is composed of YjjB and YjjP.

The protein localises to the cell inner membrane. Its function is as follows. Involved in succinate export with YjjP. Both proteins are required for export. The chain is Probable succinate transporter subunit YjjB from Proteus mirabilis (strain HI4320).